Here is a 306-residue protein sequence, read N- to C-terminus: Non-specific ribonucleoside hydrolase RihC (306 aa).

His235 is a catalytic residue.

The protein belongs to the IUNH family. RihC subfamily.

In terms of biological role, hydrolyzes both purine and pyrimidine ribonucleosides with a broad-substrate specificity. The chain is Non-specific ribonucleoside hydrolase RihC from Salmonella heidelberg (strain SL476).